Here is a 391-residue protein sequence, read N- to C-terminus: 23S rRNA (uracil(747)-C(5))-methyltransferase RlmC (391 aa).

[4Fe-4S] cluster contacts are provided by Cys-5, Cys-13, Cys-16, and Cys-95. 4 residues coordinate S-adenosyl-L-methionine: Gln-220, Phe-249, Glu-276, and Asn-322. The Nucleophile role is filled by Cys-349.

Belongs to the class I-like SAM-binding methyltransferase superfamily. RNA M5U methyltransferase family. RlmC subfamily.

It carries out the reaction uridine(747) in 23S rRNA + S-adenosyl-L-methionine = 5-methyluridine(747) in 23S rRNA + S-adenosyl-L-homocysteine + H(+). Catalyzes the formation of 5-methyl-uridine at position 747 (m5U747) in 23S rRNA. This Actinobacillus pleuropneumoniae serotype 5b (strain L20) protein is 23S rRNA (uracil(747)-C(5))-methyltransferase RlmC.